The sequence spans 704 residues: Elongation factor G (704 aa).

In terms of domain architecture, tr-type G spans 8 to 290 (ARYRNIGISA…AVIDYLPSPV (283 aa)). GTP contacts are provided by residues 17–24 (AHIDAGKT), 88–92 (DTPGH), and 142–145 (NKMD).

This sequence belongs to the TRAFAC class translation factor GTPase superfamily. Classic translation factor GTPase family. EF-G/EF-2 subfamily.

The protein localises to the cytoplasm. Catalyzes the GTP-dependent ribosomal translocation step during translation elongation. During this step, the ribosome changes from the pre-translocational (PRE) to the post-translocational (POST) state as the newly formed A-site-bound peptidyl-tRNA and P-site-bound deacylated tRNA move to the P and E sites, respectively. Catalyzes the coordinated movement of the two tRNA molecules, the mRNA and conformational changes in the ribosome. This is Elongation factor G from Salmonella agona (strain SL483).